A 497-amino-acid chain; its full sequence is Aluminum-activated malate transporter 10 (497 aa).

The next 6 helical transmembrane spans lie at 66–86 (KVVHCLKVGLALSLVSIFYYM), 88–108 (PLYDGVGGNAMWAIMTVVVVF), 123–143 (VVATILAGSLGIAVHWVATQS), 148–168 (VFVIGCSVFLFAFAATYSRFV), 173–193 (ARFDYGAMIFILTFSLVSVGG), and 210–230 (IAIGTSICIIITVFFCPIWAG). Disordered regions lie at residues 413–437 (PIETNKPEEVPSEEENKVDSEERTT) and 476–497 (DFEQDSKKKTGDNNTKQPPLSS). Residues 417–436 (NKPEEVPSEEENKVDSEERT) are compositionally biased toward basic and acidic residues. Residues 487-497 (DNNTKQPPLSS) show a composition bias toward polar residues.

This sequence belongs to the aromatic acid exporter (TC 2.A.85) family.

The protein resides in the membrane. Malate transporter. The protein is Aluminum-activated malate transporter 10 (ALMT10) of Arabidopsis thaliana (Mouse-ear cress).